The following is a 432-amino-acid chain: 3-phosphoshikimate 1-carboxyvinyltransferase (432 aa).

Residues K23, S24, and R28 each contribute to the 3-phosphoshikimate site. Residue K23 participates in phosphoenolpyruvate binding. Positions 95 and 123 each coordinate phosphoenolpyruvate. Residues S166, Q168, D315, and K342 each coordinate 3-phosphoshikimate. Q168 contacts phosphoenolpyruvate. The active-site Proton acceptor is the D315. Phosphoenolpyruvate is bound by residues R346 and R390.

It belongs to the EPSP synthase family. Monomer.

Its subcellular location is the cytoplasm. It carries out the reaction 3-phosphoshikimate + phosphoenolpyruvate = 5-O-(1-carboxyvinyl)-3-phosphoshikimate + phosphate. It participates in metabolic intermediate biosynthesis; chorismate biosynthesis; chorismate from D-erythrose 4-phosphate and phosphoenolpyruvate: step 6/7. Functionally, catalyzes the transfer of the enolpyruvyl moiety of phosphoenolpyruvate (PEP) to the 5-hydroxyl of shikimate-3-phosphate (S3P) to produce enolpyruvyl shikimate-3-phosphate and inorganic phosphate. The protein is 3-phosphoshikimate 1-carboxyvinyltransferase of Lactiplantibacillus plantarum (strain ATCC BAA-793 / NCIMB 8826 / WCFS1) (Lactobacillus plantarum).